The following is a 636-amino-acid chain: Threonine--tRNA ligase (636 aa).

In terms of domain architecture, TGS spans 1–63 (MINITTSFPN…SKDGSVDPVT (63 aa)). The tract at residues 244-535 (DHRKIAKDLG…LIEHYAGNIP (292 aa)) is catalytic. The Zn(2+) site is built by Cys335, His386, and His512.

Belongs to the class-II aminoacyl-tRNA synthetase family. As to quaternary structure, homodimer. It depends on Zn(2+) as a cofactor.

It is found in the cytoplasm. It catalyses the reaction tRNA(Thr) + L-threonine + ATP = L-threonyl-tRNA(Thr) + AMP + diphosphate + H(+). Catalyzes the attachment of threonine to tRNA(Thr) in a two-step reaction: L-threonine is first activated by ATP to form Thr-AMP and then transferred to the acceptor end of tRNA(Thr). Also edits incorrectly charged L-seryl-tRNA(Thr). The protein is Threonine--tRNA ligase of Anaplasma marginale (strain Florida).